A 191-amino-acid chain; its full sequence is Putative manganese efflux pump MntP (191 aa).

Helical transmembrane passes span Pro-3–Gly-23, Leu-37–Leu-57, Val-65–Ile-85, Trp-107–Phe-129, Cys-144–Gly-164, and Ile-169–Gly-189.

The protein belongs to the MntP (TC 9.B.29) family.

The protein resides in the cell inner membrane. Functionally, probably functions as a manganese efflux pump. This is Putative manganese efflux pump MntP from Stenotrophomonas maltophilia (strain R551-3).